A 511-amino-acid chain; its full sequence is Putative thymidine phosphorylase (511 aa).

Belongs to the thymidine/pyrimidine-nucleoside phosphorylase family. Type 2 subfamily.

It catalyses the reaction thymidine + phosphate = 2-deoxy-alpha-D-ribose 1-phosphate + thymine. The sequence is that of Putative thymidine phosphorylase from Polaromonas sp. (strain JS666 / ATCC BAA-500).